We begin with the raw amino-acid sequence, 314 residues long: GTP cyclohydrolase FolE2 (314 aa).

The interval 290-314 is disordered; that stretch reads DASAWSAPQAAAPDQQESFATGNER. Residues 291–304 are compositionally biased toward low complexity; sequence ASAWSAPQAAAPDQ. Polar residues predominate over residues 305–314; that stretch reads QESFATGNER.

It belongs to the GTP cyclohydrolase IV family.

It catalyses the reaction GTP + H2O = 7,8-dihydroneopterin 3'-triphosphate + formate + H(+). The protein operates within cofactor biosynthesis; 7,8-dihydroneopterin triphosphate biosynthesis; 7,8-dihydroneopterin triphosphate from GTP: step 1/1. Converts GTP to 7,8-dihydroneopterin triphosphate. This chain is GTP cyclohydrolase FolE2, found in Pseudomonas putida (strain ATCC 47054 / DSM 6125 / CFBP 8728 / NCIMB 11950 / KT2440).